A 1188-amino-acid chain; its full sequence is DNA-directed RNA polymerase subunit beta (1188 aa).

The protein belongs to the RNA polymerase beta chain family. The RNAP catalytic core consists of 2 alpha, 1 beta, 1 beta' and 1 omega subunit. When a sigma factor is associated with the core the holoenzyme is formed, which can initiate transcription.

It carries out the reaction RNA(n) + a ribonucleoside 5'-triphosphate = RNA(n+1) + diphosphate. DNA-dependent RNA polymerase catalyzes the transcription of DNA into RNA using the four ribonucleoside triphosphates as substrates. The polypeptide is DNA-directed RNA polymerase subunit beta (Streptococcus pyogenes serotype M3 (strain ATCC BAA-595 / MGAS315)).